The sequence spans 57 residues: uncharacterized protein (57 aa).

A helical transmembrane segment spans residues 21-37 (GTYTLVVAFVLAFLVYS).

The protein resides in the host membrane. This is an uncharacterized protein from Human herpesvirus 6B (strain Z29) (HHV-6 variant B).